The sequence spans 247 residues: uncharacterized protein (247 aa).

The protein to M.pneumoniae MPN_635 N-terminal region.

This is an uncharacterized protein from Mycoplasma pneumoniae (strain ATCC 29342 / M129 / Subtype 1) (Mycoplasmoides pneumoniae).